Reading from the N-terminus, the 127-residue chain is Large ribosomal subunit protein eL22x (127 aa).

It belongs to the eukaryotic ribosomal protein eL22 family.

In Arabidopsis thaliana (Mouse-ear cress), this protein is Large ribosomal subunit protein eL22x (RPL22A).